Here is an 820-residue protein sequence, read N- to C-terminus: Catenin beta (820 aa).

Residues 1–16 (MEQARYSNQQSVNPQQ) show a composition bias toward polar residues. The tract at residues 1 to 74 (MEQARYSNQQ…SRHEDGGEEA (74 aa)) is disordered. Residues 52-63 (SSATSHPPSVSS) show a composition bias toward low complexity. 10 ARM repeats span residues 157 to 196 (NYQD…QLSK), 199 to 239 (ASRH…NLSH), 241 to 280 (RAGL…NLLL), 283 to 322 (EGSK…ILAY), 367 to 405 (HNNK…RNLS), 406 to 445 (DCHR…NLTC), 448 to 489 (SRNK…HVTS), 495 to 535 (EMGQ…NLAL), 603 to 642 (SHNR…ELSL), and 644 to 683 (KQGA…RMSD). Positions 708 to 811 (PWGDPLDMPS…LDSIPPADNT (104 aa)) are disordered. A compositionally biased stretch (low complexity) spans 785–796 (GMDPGLPDMGPP).

Belongs to the beta-catenin family.

It localises to the cytoplasm. The protein resides in the cytoskeleton. Binds to the cytoplasmic domain of the cell-cell adhesion molecule E-cadherin, and perhaps to other (membrane) proteins. The association of catenins to cadherins produces a complex which is linked to the actin filament network, and which seems to be of primary importance for cadherins cell-adhesion properties. This is Catenin beta from Tripneustes gratilla (Hawaian sea urchin).